Consider the following 166-residue polypeptide: 16S rRNA aminocarboxypropyltransferase (166 aa).

Positions 17, 62, 84, 99, and 103 each coordinate S-adenosyl-L-methionine.

The protein belongs to the TDD superfamily. TSR3 family.

It localises to the cytoplasm. It carries out the reaction an N(1)-methylpseudouridine in rRNA + S-adenosyl-L-methionine = N(1)-methyl-N(3)-[(3S)-3-amino-3-carboxypropyl]pseudouridine in rRNA + S-methyl-5'-thioadenosine + H(+). Aminocarboxypropyltransferase that catalyzes the aminocarboxypropyl transfer on pseudouridine corresponding to position 914 in M.jannaschii 16S rRNA. It constitutes the last step in biosynthesis of the hypermodified N1-methyl-N3-(3-amino-3-carboxypropyl) pseudouridine (m1acp3-Psi). This is 16S rRNA aminocarboxypropyltransferase from Saccharolobus islandicus (strain Y.N.15.51 / Yellowstone #2) (Sulfolobus islandicus).